We begin with the raw amino-acid sequence, 453 residues long: Homogentisate 1,2-dioxygenase (453 aa).

Residue histidine 304 is the Proton acceptor of the active site. Fe cation contacts are provided by histidine 347 and glutamate 353. Tyrosine 362 and histidine 383 together coordinate homogentisate. Position 383 (histidine 383) interacts with Fe cation.

It belongs to the homogentisate dioxygenase family. Hexamer; dimer of trimers. Fe cation is required as a cofactor.

It carries out the reaction homogentisate + O2 = 4-maleylacetoacetate + H(+). Its pathway is amino-acid degradation; L-phenylalanine degradation; acetoacetate and fumarate from L-phenylalanine: step 4/6. Functionally, involved in the catabolism of homogentisate (2,5-dihydroxyphenylacetate or 2,5-OH-PhAc), a central intermediate in the degradation of phenylalanine and tyrosine. Catalyzes the oxidative ring cleavage of the aromatic ring of homogentisate to yield maleylacetoacetate. This Sinorhizobium fredii (strain NBRC 101917 / NGR234) protein is Homogentisate 1,2-dioxygenase.